Here is a 250-residue protein sequence, read N- to C-terminus: Adenosine 5'-phosphosulfate reductase (250 aa).

Residues Cys-119, Cys-120, Cys-202, and Cys-205 each contribute to the [4Fe-4S] cluster site. Residue Cys-230 is the Nucleophile; cysteine thiosulfonate intermediate of the active site.

This sequence belongs to the PAPS reductase family. CysH subfamily. It depends on [4Fe-4S] cluster as a cofactor.

Its subcellular location is the cytoplasm. It catalyses the reaction [thioredoxin]-disulfide + sulfite + AMP + 2 H(+) = adenosine 5'-phosphosulfate + [thioredoxin]-dithiol. It participates in sulfur metabolism; hydrogen sulfide biosynthesis; sulfite from sulfate. Its function is as follows. Catalyzes the formation of sulfite from adenosine 5'-phosphosulfate (APS) using thioredoxin as an electron donor. The polypeptide is Adenosine 5'-phosphosulfate reductase (Burkholderia cepacia (Pseudomonas cepacia)).